The chain runs to 78 residues: uncharacterized protein (78 aa).

This is an uncharacterized protein from Helicobacter pylori (strain J99 / ATCC 700824) (Campylobacter pylori J99).